The chain runs to 144 residues: 6-pyruvoyl tetrahydrobiopterin synthase (144 aa).

Positions 1-4 are excised as a propeptide; sequence MNAA. Serine 18 bears the Phosphoserine mark. Residue histidine 23 coordinates Zn(2+). Position 27 is a phosphoserine (serine 27). Cysteine 42 serves as the catalytic Proton acceptor. Zn(2+)-binding residues include histidine 48 and histidine 50. The Charge relay system role is filled by histidine 89. Tyrosine 127 is modified (phosphotyrosine). Glutamate 133 serves as the catalytic Charge relay system.

Belongs to the PTPS family. In terms of assembly, homohexamer formed of two homotrimers in a head to head fashion. It depends on Zn(2+) as a cofactor. Post-translationally, phosphorylation of Ser-18 is required for maximal enzyme activity.

It carries out the reaction 7,8-dihydroneopterin 3'-triphosphate = 6-pyruvoyl-5,6,7,8-tetrahydropterin + triphosphate + H(+). It participates in cofactor biosynthesis; tetrahydrobiopterin biosynthesis; tetrahydrobiopterin from 7,8-dihydroneopterin triphosphate: step 1/3. Functionally, involved in the biosynthesis of tetrahydrobiopterin, an essential cofactor of aromatic amino acid hydroxylases. Catalyzes the transformation of 7,8-dihydroneopterin triphosphate into 6-pyruvoyl tetrahydropterin. The chain is 6-pyruvoyl tetrahydrobiopterin synthase (Pts) from Rattus norvegicus (Rat).